We begin with the raw amino-acid sequence, 393 residues long: Geranylgeranyl pyrophosphate synthase 2 (393 aa).

Lysine 109, arginine 112, and histidine 141 together coordinate isopentenyl diphosphate. Residues aspartate 148 and aspartate 152 each coordinate Mg(2+). Arginine 157 is a dimethylallyl diphosphate binding site. Arginine 158 lines the isopentenyl diphosphate pocket. Positions 235, 236, and 275 each coordinate dimethylallyl diphosphate. Aspartate 278 contributes to the Mg(2+) binding site. 3 residues coordinate dimethylallyl diphosphate: asparagine 282, lysine 292, and lysine 302.

It belongs to the FPP/GGPP synthase family. Mg(2+) is required as a cofactor.

It carries out the reaction isopentenyl diphosphate + dimethylallyl diphosphate = (2E)-geranyl diphosphate + diphosphate. The enzyme catalyses isopentenyl diphosphate + (2E)-geranyl diphosphate = (2E,6E)-farnesyl diphosphate + diphosphate. It catalyses the reaction isopentenyl diphosphate + (2E,6E)-farnesyl diphosphate = (2E,6E,10E)-geranylgeranyl diphosphate + diphosphate. The protein operates within plant hormone biosynthesis; gibberellin biosynthesis. In terms of biological role, geranylgeranyl pyrophosphate synthase; part of the gene cluster that mediates the biosynthesis of gibberellins (GAs), diterpenoids that may provide a selective advantage during infection of the preferred host plant, rice. Gibberellins (GAs) are diterpenoids and are synthesized via the mevalonate pathway. Biosynthesis of the major metabolite GA3 (gibberellic acid) from geranylgeranyl diphosphate (GGPP) requires 13 steps. The GGPP produced by the geranylgeranyl diphosphate synthase GGS2 is converted to ent-kaurene via ent-copalyldiphosphate in a two-step cyclization reaction performed by the bifunctional ent-copalyl diphosphate synthase/ent-kaurene synthase enzyme (CPS/KS). Ent-Kaurene is metabolized to GAs by a series of oxidation reactions catalyzed by cytochrome P450 monooxygenases. Cytochrome P450 monooxygenase P450-4 is an ent-kaurene oxidase that catalyzes the three oxidation steps between ent-kaurene and ent-kaurenoic acid. The highly multifunctional cytochrome P450 monooxygenase P450-1 then catalyzes four steps involving oxidation at two carbon atoms, in the main pathway from ent-kaurenoic acid to GA14 via GA12-aldehyde as well as producing kaurenolides and fujenoic acids as by-products. The cytochrome P450 monooxygenase P450-2 then converts GA14 to GA4 by removal of C-20. GA4 is further converted to GA7 by the GA4 desaturase DES via 1,2-desaturation before cytochrome P450 monooxygenase P450-3, a 13-hydroxylase, hydroxylates GA7 to GA3, the final product of the GA-biosynthetic pathway. This is Geranylgeranyl pyrophosphate synthase 2 from Gibberella fujikuroi (strain CBS 195.34 / IMI 58289 / NRRL A-6831) (Bakanae and foot rot disease fungus).